The chain runs to 314 residues: Acetaldehyde dehydrogenase 3 (314 aa).

Cysteine 132 functions as the Acyl-thioester intermediate in the catalytic mechanism. NAD(+)-binding positions include 163–171 and asparagine 291; that span reads SAGPGTRAN.

Belongs to the acetaldehyde dehydrogenase family.

The enzyme catalyses acetaldehyde + NAD(+) + CoA = acetyl-CoA + NADH + H(+). The protein is Acetaldehyde dehydrogenase 3 of Dechloromonas aromatica (strain RCB).